A 523-amino-acid chain; its full sequence is Cytochrome P450 CYP82J17 (523 aa).

The chain crosses the membrane as a helical span at residues 4-24 (FLSQPITIVLAILSVLLYNIW). Cysteine 462 serves as a coordination point for heme.

It belongs to the cytochrome P450 family. Mainly expressed in leaves and seed pods and, to a lower extent, in flowers and stems.

The protein localises to the membrane. Its pathway is steroid metabolism; cholesterol metabolism. Its function is as follows. Involved in the biosynthesis of spiroketal steroid and saponin natural products from cholesterol such as diosgenin and analogs (e.g. furostanol and spirostanol), plant defense compounds used as main precursors for the industrial production of steroid hormones. During the 5,6-spiroketalization of cholesterol, may catalyze the 27-monohydroxylation of furostanol-type steroid to an intermediate product that undergoes a stereospecific formation of the terminal heterocycle to yield diosgenin. This Trigonella foenum-graecum (Fenugreek) protein is Cytochrome P450 CYP82J17.